The following is a 275-amino-acid chain: Large ribosomal subunit protein uL2 (275 aa).

Disordered regions lie at residues 38-59 (TRGSGRNNNGHITVRHRGGGHK) and 223-275 (VAMN…RKRK). Basic residues predominate over residues 50–59 (TVRHRGGGHK). The span at 229–244 (DHPHGGGEGRTGEARE) shows a compositional bias: basic and acidic residues.

It belongs to the universal ribosomal protein uL2 family. In terms of assembly, part of the 50S ribosomal subunit. Forms a bridge to the 30S subunit in the 70S ribosome.

In terms of biological role, one of the primary rRNA binding proteins. Required for association of the 30S and 50S subunits to form the 70S ribosome, for tRNA binding and peptide bond formation. It has been suggested to have peptidyltransferase activity; this is somewhat controversial. Makes several contacts with the 16S rRNA in the 70S ribosome. This Bordetella bronchiseptica (strain ATCC BAA-588 / NCTC 13252 / RB50) (Alcaligenes bronchisepticus) protein is Large ribosomal subunit protein uL2.